The chain runs to 357 residues: DNA integrity scanning protein DisA (357 aa).

Residues 8 to 146 (VKSMINILQL…GNLRYTLKDI (139 aa)) enclose the DAC domain. ATP-binding positions include Gly-75, Leu-93, and 106-110 (MRHRT).

It belongs to the DisA family. As to quaternary structure, homooctamer. Requires Mg(2+) as cofactor.

The enzyme catalyses 2 ATP = 3',3'-c-di-AMP + 2 diphosphate. In terms of biological role, participates in a DNA-damage check-point that is active prior to asymmetric division when DNA is damaged. DisA forms globular foci that rapidly scan along the chromosomes during sporulation, searching for lesions. When a lesion is present, DisA pauses at the lesion site. This triggers a cellular response that culminates in a temporary block in sporulation initiation. Functionally, also has diadenylate cyclase activity, catalyzing the condensation of 2 ATP molecules into cyclic di-AMP (c-di-AMP). c-di-AMP acts as a signaling molecule that couples DNA integrity with progression of sporulation. The rise in c-di-AMP level generated by DisA while scanning the chromosome, operates as a positive signal that advances sporulation; upon encountering a lesion, the DisA focus arrests at the damaged site and halts c-di-AMP synthesis. This is DNA integrity scanning protein DisA from Bacillus cereus (strain G9842).